A 438-amino-acid polypeptide reads, in one-letter code: Enolase (438 aa).

Gln-174 is a binding site for (2R)-2-phosphoglycerate. The active-site Proton donor is the Glu-216. The Mg(2+) site is built by Asp-253, Glu-297, and Asp-324. The (2R)-2-phosphoglycerate site is built by Lys-349, Arg-378, Ser-379, and Lys-400. Catalysis depends on Lys-349, which acts as the Proton acceptor.

The protein belongs to the enolase family. In terms of assembly, component of the RNA degradosome, a multiprotein complex involved in RNA processing and mRNA degradation. Mg(2+) is required as a cofactor.

Its subcellular location is the cytoplasm. The protein resides in the secreted. It localises to the cell surface. It carries out the reaction (2R)-2-phosphoglycerate = phosphoenolpyruvate + H2O. The protein operates within carbohydrate degradation; glycolysis; pyruvate from D-glyceraldehyde 3-phosphate: step 4/5. Functionally, catalyzes the reversible conversion of 2-phosphoglycerate (2-PG) into phosphoenolpyruvate (PEP). It is essential for the degradation of carbohydrates via glycolysis. The sequence is that of Enolase from Psychrobacter cryohalolentis (strain ATCC BAA-1226 / DSM 17306 / VKM B-2378 / K5).